The sequence spans 418 residues: Thyroxine-binding globulin (418 aa).

A signal peptide spans 1–20 (MSVFFYLFVLVFGLQATIHC). 6 N-linked (GlcNAc...) asparagine glycosylation sites follow: N24, N39, N102, N168, N227, and N256. Thyroxine-binding residues include N296 and K401.

This sequence belongs to the serpin family.

The protein resides in the secreted. Its function is as follows. Major thyroid hormone transport protein in serum. This chain is Thyroxine-binding globulin (Serpina7), found in Mus musculus (Mouse).